The following is a 329-amino-acid chain: MRLCKFTALSSLLFSLLLLSASAEQCGSQAGGARCPSGLCCSKFGWCGNTNDYCGPGNCQSQCPGGPTPTPPTPPGGGDLGSIISSSMFDQMLKHRNDNACQGKGFYSYNAFINAARSFPGFGTSGDTTARKREIAAFFAQTSHETTGGWATAPDGPYAWGYCWLREQGSPGDYCTPSGQWPCAPGRKYFGRGPIQISHNYNYGPCGRAIGVDLLNNPDLVATDPVISFKSALWFWMTPQSPKPSCHDVIIGRWQPSAGDRAANRLPGFGVITNIINGGLECGRGTDSRVQDRIGFYRRYCSILGVSPGDNLDCGNQRSFGNGLLVDTM.

Positions 1–23 (MRLCKFTALSSLLFSLLLLSASA) are cleaved as a signal peptide. In terms of domain architecture, Chitin-binding type-1 spans 24–65 (EQCGSQAGGARCPSGLCCSKFGWCGNTNDYCGPGNCQSQCPG). Cystine bridges form between Cys26-Cys41, Cys35-Cys47, Cys40-Cys54, and Cys59-Cys63. A 4-hydroxyproline; partial modification is found at Pro67. Pro69, Pro71, Pro72, and Pro74 each carry 4-hydroxyproline. Pro75 carries the post-translational modification 4-hydroxyproline; partial. Cystine bridges form between Cys101–Cys163, Cys175–Cys183, and Cys282–Cys314. Glu145 acts as the Proton donor in catalysis. A propeptide spans 323-329 (GLLVDTM) (removed in mature form).

The protein belongs to the glycosyl hydrolase 19 family. Chitinase class I subfamily. The 4-hydroxyproline residues are not glycosylated in this plant vacuolar protein.

Its subcellular location is the vacuole. The catalysed reaction is Random endo-hydrolysis of N-acetyl-beta-D-glucosaminide (1-&gt;4)-beta-linkages in chitin and chitodextrins.. Functionally, defense against chitin-containing fungal pathogens. In Nicotiana tabacum (Common tobacco), this protein is Endochitinase A (CHN48).